A 132-amino-acid chain; its full sequence is MIVRTLAEAEASDRRVTSENWESVRLLLKDDNMGFSFHITTIFEGADFEMHYKNHLESVFCMSGEGEVETLADGKVYPIKPGTIYILDKHDKHVLRATKEMKMACVFNPPVTGKEVHDESGAYPLEAEAIVD.

This sequence belongs to the ectoine synthase family.

It carries out the reaction (2S)-4-acetamido-2-aminobutanoate = L-ectoine + H2O. Its pathway is amine and polyamine biosynthesis; ectoine biosynthesis; L-ectoine from L-aspartate 4-semialdehyde: step 3/3. Functionally, catalyzes the circularization of gamma-N-acetyl-alpha,gamma-diaminobutyric acid (ADABA) to ectoine (1,4,5,6-tetrahydro-2-methyl-4-pyrimidine carboxylic acid), which is an excellent osmoprotectant. The sequence is that of L-ectoine synthase from Saccharophagus degradans (strain 2-40 / ATCC 43961 / DSM 17024).